Consider the following 465-residue polypeptide: Phytase A (465 aa).

The signal sequence occupies residues 1–26 (MVTLTFLLSAAYLLSGRVSAAPSSAG). C30 and C39 are disulfide-bonded. Q49, Y50, R80, H81, R84, and T87 together coordinate 1D-myo-inositol hexakisphosphate. Cystine bridges form between C70–C412, C213–C463, C262–C280, and C434–C442. H81 serves as the catalytic Nucleophile. N-linked (GlcNAc...) asparagine glycosylation occurs at N104. R164 contacts 1D-myo-inositol hexakisphosphate. Residue N205 is glycosylated (N-linked (GlcNAc...) asparagine). Residue D209 coordinates 1D-myo-inositol hexakisphosphate. N228 is a glycosylation site (N-linked (GlcNAc...) asparagine). K299 contacts 1D-myo-inositol hexakisphosphate. Residues N337 and N350 are each glycosylated (N-linked (GlcNAc...) asparagine). 1D-myo-inositol hexakisphosphate-binding residues include H359 and D360. A glycan (N-linked (GlcNAc...) asparagine) is linked at N374.

This sequence belongs to the histidine acid phosphatase family. As to quaternary structure, monomer.

It is found in the secreted. It catalyses the reaction 1D-myo-inositol hexakisphosphate + H2O = 1D-myo-inositol 1,2,4,5,6-pentakisphosphate + phosphate. It carries out the reaction 1D-myo-inositol 1,2,4,5,6-pentakisphosphate + H2O = 1D-myo-inositol 1,2,5,6-tetrakisphosphate + phosphate. The catalysed reaction is 1D-myo-inositol 1,2,5,6-tetrakisphosphate + H2O = 1D-myo-inositol 1,2,6-trisphosphate + phosphate. The enzyme catalyses 1D-myo-inositol 1,2,6-trisphosphate + H2O = 1D-myo-inositol 1,2-bisphosphate + phosphate. It catalyses the reaction 1D-myo-inositol 1,2-bisphosphate + H2O = 1D-myo-inositol 2-phosphate + phosphate. Its function is as follows. Catalyzes the phosphate monoester hydrolysis of phytic acid (myo-inositol hexakisphosphate), which results in the stepwise formation of myo-inositol pentakis-, tetrakis-, tris-, bis-, and monophosphates, as well as the liberation of inorganic phosphate. Myo-inositol 2-monophosphate is the end product. Has a broad substrate specificity and is also able to dephosphorylate other classic acid phosphatase substrates such as p-nitrophenyl phosphate, phenyl phosphate, fructose 1,6-bisphosphate, fructose 6-phosphate, glucose 6-phosphate, ribose 5-phosphate, alpha-glycerophosphate, beta-glycerophosphate, 3-phosphoglycerate, phosphoenolpyruvate, as well as ADP and ATP. This chain is Phytase A (phyA), found in Aspergillus fumigatus (strain ATCC MYA-4609 / CBS 101355 / FGSC A1100 / Af293) (Neosartorya fumigata).